We begin with the raw amino-acid sequence, 116 residues long: Large ribosomal subunit protein uL18 (116 aa).

The protein belongs to the universal ribosomal protein uL18 family. As to quaternary structure, part of the 50S ribosomal subunit; part of the 5S rRNA/L5/L18/L25 subcomplex. Contacts the 5S and 23S rRNAs.

This is one of the proteins that bind and probably mediate the attachment of the 5S RNA into the large ribosomal subunit, where it forms part of the central protuberance. The polypeptide is Large ribosomal subunit protein uL18 (Pseudomonas putida (strain W619)).